Here is a 294-residue protein sequence, read N- to C-terminus: NAD kinase (294 aa).

The Proton acceptor role is filled by aspartate 73. NAD(+) contacts are provided by residues 73–74 (DG), 147–148 (NE), histidine 158, arginine 175, aspartate 177, and 188–193 (TAYALS).

It belongs to the NAD kinase family. It depends on a divalent metal cation as a cofactor.

It is found in the cytoplasm. The enzyme catalyses NAD(+) + ATP = ADP + NADP(+) + H(+). In terms of biological role, involved in the regulation of the intracellular balance of NAD and NADP, and is a key enzyme in the biosynthesis of NADP. Catalyzes specifically the phosphorylation on 2'-hydroxyl of the adenosine moiety of NAD to yield NADP. The polypeptide is NAD kinase (Tolumonas auensis (strain DSM 9187 / NBRC 110442 / TA 4)).